Consider the following 391-residue polypeptide: Paired box protein Pax-5 (391 aa).

The segment at residues 16-142 is a DNA-binding region (paired); the sequence is GHGGVNQLGG…SSINRIIRTK (127 aa). The PAI subdomain stretch occupies residues 19–75; the sequence is GVNQLGGVFVNGRPLPDVVRQRIVELAHQGVRPCDISRQLRVSHGCVSKILGRYYET. Positions 94-142 are RED subdomain; sequence KVVEKIAEYKRQNPTMFAWEIRDRLLAERVCDNDTVPSVSSINRIIRTK. The disordered stretch occupies residues 182–218; sequence SGILGITSPSADTNKRKRDEGIQESPVPNGHSLPGRD.

In terms of assembly, interacts with ETS1; this interaction alters PAX5 DNA-binding properties. Binds DNA as a monomer. Interacts with TBP; this interaction allows PAX5 to interact with the basal transcription machinery. Interacts with RB1. Interacts with TLE4. Interacts with DAXX. O-glycosylated. Post-translationally, phosphorylated by SYK. This phosphorylation plays an important role in the abolition of BLIMP1 repression by PAX5 in order to trigger plasma cell differentiation. In terms of tissue distribution, expressed in all B-lymphoid organs, in the embryonic midbrain and in adult testis.

Its subcellular location is the nucleus. Functionally, transcription factor that plays an essential role in commitment of lymphoid progenitors to the B-lymphocyte lineage. Fulfills a dual role by repressing B-lineage inappropriate genes and simultaneously activating B-lineage-specific genes. In turn, regulates cell adhesion and migration, induces V(H)-to-D(H)J(H) recombination, facilitates pre-B-cell receptor signaling and promotes development to the mature B-cell stage. Repression of the cohesin-release factor WAPL causes global changes of the chromosomal architecture in pro-B cells to facilitate the generation of a diverse antibody repertoire. The polypeptide is Paired box protein Pax-5 (Pax5) (Mus musculus (Mouse)).